Consider the following 353-residue polypeptide: Deoxyribonuclease-2-alpha (353 aa).

A signal peptide spans 1–19; that stretch reads MATLRSLLLAALLWVPAEA. The cysteines at positions 22 and 161 are disulfide-linked. N-linked (GlcNAc...) asparagine glycans are attached at residues Asn71, Asn88, Asn214, and Asn268. 2 cysteine pairs are disulfide-bonded: Cys269/Cys349 and Cys310/Cys329. His297 is a catalytic residue.

Belongs to the DNase II family. As to expression, highly expressed in fetal liver macrophages.

It localises to the lysosome. The enzyme catalyses Endonucleolytic cleavage to nucleoside 3'-phosphates and 3'-phosphooligonucleotide end-products.. In terms of biological role, hydrolyzes DNA under acidic conditions with a preference for double-stranded DNA. Plays a major role in the clearance of nucleic acids generated through apoptosis, hence preventing autoinflammation. Necessary for proper fetal development and for definitive erythropoiesis in fetal liver and bone marrow, where it degrades nuclear DNA expelled from erythroid precursor cells. This Mus musculus (Mouse) protein is Deoxyribonuclease-2-alpha (Dnase2).